The following is a 307-amino-acid chain: UDP-3-O-acyl-N-acetylglucosamine deacetylase (307 aa).

Zn(2+)-binding residues include H78, H241, and D245. Catalysis depends on H268, which acts as the Proton donor.

This sequence belongs to the LpxC family. Zn(2+) is required as a cofactor.

The enzyme catalyses a UDP-3-O-[(3R)-3-hydroxyacyl]-N-acetyl-alpha-D-glucosamine + H2O = a UDP-3-O-[(3R)-3-hydroxyacyl]-alpha-D-glucosamine + acetate. It participates in glycolipid biosynthesis; lipid IV(A) biosynthesis; lipid IV(A) from (3R)-3-hydroxytetradecanoyl-[acyl-carrier-protein] and UDP-N-acetyl-alpha-D-glucosamine: step 2/6. Functionally, catalyzes the hydrolysis of UDP-3-O-myristoyl-N-acetylglucosamine to form UDP-3-O-myristoylglucosamine and acetate, the committed step in lipid A biosynthesis. The protein is UDP-3-O-acyl-N-acetylglucosamine deacetylase of Bordetella avium (strain 197N).